Consider the following 497-residue polypeptide: Cytochrome P450 CYP94D108 (497 aa).

The chain crosses the membrane as a helical span at residues leucine 6 to proline 26. Cysteine 439 lines the heme pocket.

The protein belongs to the cytochrome P450 family. In terms of tissue distribution, mainly expressed in roots and, at low levels, in leaves, fruits and stems.

Its subcellular location is the membrane. It participates in steroid metabolism; cholesterol metabolism. Functionally, involved in the biosynthesis of spiroketal steroid and saponin natural products from cholesterol such as diosgenin and analogs (e.g. furostanol and spirostanol), plant defense compounds used as main precursors for the industrial production of steroid hormones. During the 5,6-spiroketalization of cholesterol, may catalyze the 27-monohydroxylation of furostanol-type steroid to an intermediate product that undergoes a stereospecific formation of the terminal heterocycle to yield diosgenin. The polypeptide is Cytochrome P450 CYP94D108 (Paris polyphylla (Daiswa polyphylla)).